A 267-amino-acid chain; its full sequence is Phosphate import ATP-binding protein PstB (267 aa).

The 240-residue stretch at 12–251 (VSLDNVSIRY…EFDKTKNMFN (240 aa)) folds into the ABC transporter domain. 44–51 (GPSGCGKS) serves as a coordination point for ATP.

The protein belongs to the ABC transporter superfamily. Phosphate importer (TC 3.A.1.7) family. As to quaternary structure, the complex is composed of two ATP-binding proteins (PstB), two transmembrane proteins (PstC and PstA) and a solute-binding protein (PstS).

It is found in the cell inner membrane. The catalysed reaction is phosphate(out) + ATP + H2O = ADP + 2 phosphate(in) + H(+). In terms of biological role, part of the ABC transporter complex PstSACB involved in phosphate import. Responsible for energy coupling to the transport system. The protein is Phosphate import ATP-binding protein PstB of Prochlorococcus marinus (strain NATL2A).